The chain runs to 472 residues: Probable serine/threonine-protein kinase At1g01540 (472 aa).

Residues 24–44 form a helical membrane-spanning segment; that stretch reads LWVVIGILLGSLIVIALFLLS. Thr-67 and Thr-143 each carry phosphothreonine. Positions 154 to 431 constitute a Protein kinase domain; sequence LCEENVIGEG…IHMLEAEDLL (278 aa). ATP is bound by residues 160–168 and Lys-182; that span reads IGEGGYGIV. A Phosphotyrosine modification is found at Tyr-227. The active-site Proton acceptor is the Asp-280. Phosphoserine is present on Ser-284. Thr-314 and Thr-319 each carry phosphothreonine. The residue at position 327 (Tyr-327) is a Phosphotyrosine. The span at 437-449 shows a compositional bias: basic and acidic residues; that stretch reads RTTRDHGSRERQE. The segment at 437–472 is disordered; the sequence is RTTRDHGSRERQETAVVAAGSESGESGSRHHQQKQR. Residues 451 to 462 show a composition bias toward low complexity; it reads AVVAAGSESGES.

This sequence belongs to the protein kinase superfamily. Ser/Thr protein kinase family.

Its subcellular location is the membrane. The enzyme catalyses L-seryl-[protein] + ATP = O-phospho-L-seryl-[protein] + ADP + H(+). It carries out the reaction L-threonyl-[protein] + ATP = O-phospho-L-threonyl-[protein] + ADP + H(+). This is Probable serine/threonine-protein kinase At1g01540 from Arabidopsis thaliana (Mouse-ear cress).